Consider the following 416-residue polypeptide: Enterobactin exporter EntS (416 aa).

Residues 1-21 (MNKQSWLLNLSLLKTHPAFRA) lie on the Cytoplasmic side of the membrane. Residues 22–42 (VFLARFISIVSLGLLGVAVPV) form a helical membrane-spanning segment. At 43–55 (QIQIMTHSTWQVG) the chain is on the periplasmic side. The chain crosses the membrane as a helical span at residues 56-76 (LSVTLTGGAMFVGLMVGGVLA). Topologically, residues 77–83 (DRYERKK) are cytoplasmic. A helical transmembrane segment spans residues 84–104 (VILLARGTCGIGFIGLCLNAL). Residues 105 to 109 (LPEPS) lie on the Periplasmic side of the membrane. Residues 110 to 130 (LLAIYLLGLWDGFFASLGVTA) form a helical membrane-spanning segment. The Cytoplasmic segment spans residues 131–156 (LLAATPALVGRENLMQAGAITMLTVR). The chain crosses the membrane as a helical span at residues 157 to 177 (LGSVISPMIGGLLLATGGVAW). Residue asparagine 178 is a topological domain, periplasmic. The chain crosses the membrane as a helical span at residues 179-199 (YGLAAAGTFITLLPLLSLPAL). Over 200–218 (PPPPQPREHPLKSLLAGFR) the chain is Cytoplasmic. A helical membrane pass occupies residues 219-239 (FLLASPLVGGIALLGGLLTMA). Residues 240–256 (SAVRVLYPALADNWQMS) lie on the Periplasmic side of the membrane. A helical membrane pass occupies residues 257 to 277 (AAQIGFLYAAIPLGAAIGALT). Residues 278-287 (SGKLAHSVRP) lie on the Cytoplasmic side of the membrane. Residues 288–307 (GLLMLLSTLGAFLAIGLFGL) traverse the membrane as a helical segment. Topologically, residues 308–313 (MPMWIL) are periplasmic. Residues 314-336 (GVVCLALFGWLSAVSSLLQYTML) traverse the membrane as a helical segment. Residues 337-356 (QTQTPEAMLGRINGLWTAQN) are Cytoplasmic-facing. Residues 357–377 (VTGDAIGAALLGGLGAMMTPV) form a helical membrane-spanning segment. Alanine 378 is a topological domain (periplasmic). A helical transmembrane segment spans residues 379–399 (SASASGFGLLIIGVLLLLVLV). Residues 400 to 416 (ELRRFRQTPPQVTASDS) lie on the Cytoplasmic side of the membrane.

Belongs to the major facilitator superfamily. EntS (TC 2.A.1.38) family.

The protein localises to the cell inner membrane. Functionally, component of an export pathway for enterobactin. In Escherichia coli O127:H6 (strain E2348/69 / EPEC), this protein is Enterobactin exporter EntS.